Here is a 1162-residue protein sequence, read N- to C-terminus: Transcription termination factor 2 (1162 aa).

Positions 6, 9, 32, and 37 each coordinate Zn(2+). The segment at 6–46 adopts a GRF-type zinc-finger fold; the sequence is CPEHGTFCFLKTGVRDGPNKGKSFYVCRADTCSFVRATDIP. Disordered stretches follow at residues 97 to 116, 142 to 358, 388 to 407, and 459 to 503; these read PDSKEHSVSNKSQHASETFH, IKGE…EEDD, DRSVQRKVSPASGVSKKVEP, and LSPE…TQPV. Residues 105 to 116 show a composition bias toward polar residues; that stretch reads SNKSQHASETFH. Residues 142-178 show a composition bias toward basic and acidic residues; the sequence is IKGEGEEKKADKKQREKGDQLFDQKKEQKPEMMEKDL. Lys143 participates in a covalent cross-link: Glycyl lysine isopeptide (Lys-Gly) (interchain with G-Cter in SUMO2). Residues 219–232 are compositionally biased toward polar residues; the sequence is IKSQQCQGNELTRP. A compositionally biased stretch (low complexity) spans 233-245; that stretch reads SASSQEKSSGKSQ. Basic and acidic residues predominate over residues 246 to 258; sequence DVQRESEPLREKV. Over residues 261–274 the composition is skewed to polar residues; the sequence is LLPQNVHSHNSISK. Residues 323-338 show a composition bias toward low complexity; sequence PAPGGPAAQAAPAAPG. The span at 459–485 shows a compositional bias: polar residues; sequence LSPEQGTNEKSNSQVPQQSHFTKTTTG. At Ser460 the chain carries Phosphoserine. Residues 583-786 form the Helicase ATP-binding domain; that stretch reads WRESQKPQGG…YSLLKFLRCS (204 aa). Position 596 to 603 (596 to 603) interacts with ATP; the sequence is DDMGLGKT. The short motif at 737-740 is the DEAH box element; that stretch reads DEAH. The tract at residues 871 to 890 is disordered; it reads KRHESRGNQSGRSPNNPFSR. Polar residues predominate over residues 877–888; that stretch reads GNQSGRSPNNPF. A phosphoserine mark is found at Ser883 and Ser908. In terms of domain architecture, Helicase C-terminal spans 995–1157; that stretch reads SLLAELEAIQ…VTKLTLADLR (163 aa).

The protein belongs to the SNF2/RAD54 helicase family. In terms of assembly, interacts with CDC5L. Part of the spliceosome.

It is found in the cytoplasm. Its subcellular location is the nucleus. In terms of biological role, dsDNA-dependent ATPase which acts as a transcription termination factor by coupling ATP hydrolysis with removal of RNA polymerase II from the DNA template. May contribute to mitotic transcription repression. May also be involved in pre-mRNA splicing. This chain is Transcription termination factor 2 (TTF2), found in Homo sapiens (Human).